The chain runs to 325 residues: Glyoxylate/hydroxypyruvate reductase B (325 aa).

Active-site residues include Arg-237 and Glu-266. The active-site Proton donor is the His-285.

It belongs to the D-isomer specific 2-hydroxyacid dehydrogenase family. GhrB subfamily. Homodimer.

It localises to the cytoplasm. The catalysed reaction is glycolate + NADP(+) = glyoxylate + NADPH + H(+). The enzyme catalyses (R)-glycerate + NAD(+) = 3-hydroxypyruvate + NADH + H(+). It catalyses the reaction (R)-glycerate + NADP(+) = 3-hydroxypyruvate + NADPH + H(+). Its function is as follows. Catalyzes the NADPH-dependent reduction of glyoxylate and hydroxypyruvate into glycolate and glycerate, respectively. In Serratia proteamaculans (strain 568), this protein is Glyoxylate/hydroxypyruvate reductase B.